Here is a 132-residue protein sequence, read N- to C-terminus: Small ribosomal subunit protein uS19 (132 aa).

Belongs to the universal ribosomal protein uS19 family. Part of the 30S ribosomal subunit.

Functionally, protein S19 forms a complex with S13 that binds strongly to the 16S ribosomal RNA. This Pyrococcus furiosus (strain ATCC 43587 / DSM 3638 / JCM 8422 / Vc1) protein is Small ribosomal subunit protein uS19.